The primary structure comprises 151 residues: MAPRKNKVAKEEVQVTLGPQHLVGETVFGVAHIFASFNDTFVHVTDLSGRETIARVTGGMKVKADRDEASPYAAMLAAQDVAEKCKTLGITALHIKLRATGGNKTKTPGPGAQSALRALARSSMKIGRIEDVTPVPSDSTRRKGGRRGRRL.

Residues D131 to L151 are disordered. Over residues R142–L151 the composition is skewed to basic residues.

This sequence belongs to the universal ribosomal protein uS11 family.

The sequence is that of Small ribosomal subunit protein uS11 from Bombyx mori (Silk moth).